Here is a 330-residue protein sequence, read N- to C-terminus: Calponin-3 (330 aa).

At Lys-23 the chain carries N6-acetyllysine. Residues 26–130 (QQAEEDLRNW…TLVALAGLAK (105 aa)) form the Calponin-homology (CH) domain. Lys-158 is modified (N6-methyllysine). Calponin-like repeat units lie at residues 164–189 (IGLQ…RHLY), 204–229 (ISLQ…RDIY), and 243–268 (ISLQ…RQVY). A disordered region spans residues 279-330 (PVIHNGSQGTGTNGSEISDSDYQAEYPDEYHGEYPDEYPREYQYGDDQGIDY). The segment covering 306–318 (DEYHGEYPDEYPR) has biased composition (basic and acidic residues).

The protein belongs to the calponin family.

In terms of biological role, thin filament-associated protein that is implicated in the regulation and modulation of smooth muscle contraction. It is capable of binding to actin, calmodulin and tropomyosin. The interaction of calponin with actin inhibits the actomyosin Mg-ATPase activity. This chain is Calponin-3 (Cnn3), found in Rattus norvegicus (Rat).